Consider the following 349-residue polypeptide: Nuclear distribution protein nudE homolog 1-B (349 aa).

Residues 22-189 (VAMKYKQCSE…ELAVQQKQEK (168 aa)) are a coiled coil.

Belongs to the nudE family. In terms of assembly, self-associates. Interacts with pafah1b1. In terms of processing, phosphorylated in mitosis.

The protein resides in the cytoplasm. Its subcellular location is the cytoskeleton. It localises to the microtubule organizing center. The protein localises to the centrosome. It is found in the spindle. The protein resides in the chromosome. Its subcellular location is the centromere. It localises to the kinetochore. The protein localises to the cleavage furrow. It is found in the cytoplasmic vesicle membrane. Functionally, required for centrosome duplication and formation and function of the mitotic spindle. The chain is Nuclear distribution protein nudE homolog 1-B (nde1-b) from Xenopus laevis (African clawed frog).